We begin with the raw amino-acid sequence, 548 residues long: Polynucleotide 5'-hydroxyl-kinase nol-9 (548 aa).

Position 186–193 (Gly-186–Ser-193) interacts with ATP.

It belongs to the Clp1 family. NOL9/GRC3 subfamily.

It is found in the nucleus. The protein localises to the nucleolus. Its function is as follows. Polynucleotide 5'-kinase involved in rRNA processing. The protein is Polynucleotide 5'-hydroxyl-kinase nol-9 (nol-9) of Caenorhabditis briggsae.